We begin with the raw amino-acid sequence, 430 residues long: Adenylosuccinate synthetase (430 aa).

GTP contacts are provided by residues 12–18 (GDEGKGK) and 40–42 (GHT). The active-site Proton acceptor is the D13. Residues D13 and G40 each contribute to the Mg(2+) site. Residues 13–16 (DEGK), 38–41 (NAGH), T130, R144, Q224, T239, and R303 contribute to the IMP site. The active-site Proton donor is H41. 299-305 (TVTGRKR) lines the substrate pocket. Residues R305, 331–333 (KLD), and 413–415 (STS) each bind GTP.

Belongs to the adenylosuccinate synthetase family. In terms of assembly, homodimer. It depends on Mg(2+) as a cofactor.

It localises to the cytoplasm. It carries out the reaction IMP + L-aspartate + GTP = N(6)-(1,2-dicarboxyethyl)-AMP + GDP + phosphate + 2 H(+). Its pathway is purine metabolism; AMP biosynthesis via de novo pathway; AMP from IMP: step 1/2. In terms of biological role, plays an important role in the de novo pathway of purine nucleotide biosynthesis. Catalyzes the first committed step in the biosynthesis of AMP from IMP. This chain is Adenylosuccinate synthetase, found in Parvibaculum lavamentivorans (strain DS-1 / DSM 13023 / NCIMB 13966).